A 390-amino-acid polypeptide reads, in one-letter code: Acetylornithine aminotransferase (390 aa).

Pyridoxal 5'-phosphate contacts are provided by residues 105–106 (GA) and Phe-132. Arg-135 provides a ligand contact to N(2)-acetyl-L-ornithine. Position 217–220 (217–220 (DEVQ)) interacts with pyridoxal 5'-phosphate. Lys-246 carries the N6-(pyridoxal phosphate)lysine modification. Position 274 (Ser-274) interacts with N(2)-acetyl-L-ornithine. Thr-275 contributes to the pyridoxal 5'-phosphate binding site.

It belongs to the class-III pyridoxal-phosphate-dependent aminotransferase family. ArgD subfamily. Homodimer. The cofactor is pyridoxal 5'-phosphate.

The protein resides in the cytoplasm. It catalyses the reaction N(2)-acetyl-L-ornithine + 2-oxoglutarate = N-acetyl-L-glutamate 5-semialdehyde + L-glutamate. Its pathway is amino-acid biosynthesis; L-arginine biosynthesis; N(2)-acetyl-L-ornithine from L-glutamate: step 4/4. The chain is Acetylornithine aminotransferase from Methanothermobacter thermautotrophicus (strain ATCC 29096 / DSM 1053 / JCM 10044 / NBRC 100330 / Delta H) (Methanobacterium thermoautotrophicum).